Here is a 218-residue protein sequence, read N- to C-terminus: Ras-related protein Rab-42 (218 aa).

GTP is bound by residues A19, G21, K22, T23, and T46. Mg(2+) is bound by residues T23, T46, and D70. G73, K130, D132, V160, and K161 together coordinate GTP. Residues C216 and C218 are each lipidated (S-geranylgeranyl cysteine).

This sequence belongs to the small GTPase superfamily. Rab family. Requires Mg(2+) as cofactor.

It is found in the membrane. It catalyses the reaction GTP + H2O = GDP + phosphate + H(+). Its activity is regulated as follows. Regulated by guanine nucleotide exchange factors (GEFs) which promote the exchange of bound GDP for free GTP. Regulated by GTPase activating proteins (GAPs) which increase the GTP hydrolysis activity. Inhibited by GDP dissociation inhibitors (GDIs). Its function is as follows. The small GTPases Rab are key regulators of intracellular membrane trafficking, from the formation of transport vesicles to their fusion with membranes. Rabs cycle between an inactive GDP-bound form and an active GTP-bound form that is able to recruit to membranes different sets of downstream effectors directly responsible for vesicle formation, movement, tethering and fusion. The physiological function of RAB42 remains undefined. In Homo sapiens (Human), this protein is Ras-related protein Rab-42.